We begin with the raw amino-acid sequence, 419 residues long: Haloacid dehalogenase-like hydrolase domain-containing 5 (419 aa).

A signal peptide spans 1–15 (MAALAGLGVLGAGRH).

The protein belongs to the HAD-like hydrolase superfamily.

This Mus musculus (Mouse) protein is Haloacid dehalogenase-like hydrolase domain-containing 5.